The chain runs to 255 residues: Glutamate racemase (255 aa).

Substrate is bound by residues 7–8 and 39–40; these read DS and YG. The Proton donor/acceptor role is filled by C70. 71–72 lines the substrate pocket; it reads NT. C181 functions as the Proton donor/acceptor in the catalytic mechanism. Residue 182 to 183 coordinates substrate; the sequence is TH.

It belongs to the aspartate/glutamate racemases family.

The enzyme catalyses L-glutamate = D-glutamate. It participates in cell wall biogenesis; peptidoglycan biosynthesis. Its function is as follows. Provides the (R)-glutamate required for cell wall biosynthesis. In Helicobacter pylori (strain HPAG1), this protein is Glutamate racemase.